A 253-amino-acid polypeptide reads, in one-letter code: Large ribosomal subunit protein uL4 (253 aa).

The segment at 61-107 is disordered; the sequence is GWGSGRGTSHVPRLVNSSRAARVPHARGGRRAHPPKPEADRSEKVNT. The segment covering 82–94 has biased composition (basic residues); it reads RVPHARGGRRAHP. The segment covering 95–107 has biased composition (basic and acidic residues); the sequence is PKPEADRSEKVNT.

Belongs to the universal ribosomal protein uL4 family. Part of the 50S ribosomal subunit.

Functionally, one of the primary rRNA binding proteins, this protein initially binds near the 5'-end of the 23S rRNA. It is important during the early stages of 50S assembly. It makes multiple contacts with different domains of the 23S rRNA in the assembled 50S subunit and ribosome. In terms of biological role, forms part of the polypeptide exit tunnel. This chain is Large ribosomal subunit protein uL4, found in Methanosarcina barkeri (strain Fusaro / DSM 804).